The chain runs to 496 residues: NADP-dependent glyceraldehyde-3-phosphate dehydrogenase (496 aa).

Substrate contacts are provided by residues Arg-116 and Asn-169 to Tyr-170. 3 residues coordinate NADP(+): Lys-192, Thr-195, and Asp-230. Gly-245–Gly-249 contributes to the NAD(+) binding site. Catalysis depends on Glu-264, which acts as the Proton acceptor. Arg-297 to Thr-299 provides a ligand contact to substrate. Cys-298 acts as the Nucleophile in catalysis. NADP(+) is bound at residue Glu-391. The residue at position 404 (Ser-404) is a Phosphoserine. Residue Arg-451 participates in substrate binding.

The protein belongs to the aldehyde dehydrogenase family. As to quaternary structure, interacts with 14-3-3 protein when phosphorylated. This interaction is released by divalent cations. In terms of processing, phosphorylated in shoots and non-photosynthetic tissues, but not in leaves.

It is found in the cytoplasm. The catalysed reaction is D-glyceraldehyde 3-phosphate + NADP(+) + H2O = (2R)-3-phosphoglycerate + NADPH + 2 H(+). Insensitive to magnesium or calcium when dephosphorylated. When phosphorylated, 3-fold activation by magnesium or calcium, 2-fold activation by potassium, inhibited by ADP and AMP and insensitive to ATP or PPi. Its function is as follows. Important as a means of generating NADPH for biosynthetic reactions. The protein is NADP-dependent glyceraldehyde-3-phosphate dehydrogenase (GAPN) of Triticum aestivum (Wheat).